A 280-amino-acid polypeptide reads, in one-letter code: 4-diphosphocytidyl-2-C-methyl-D-erythritol kinase (280 aa).

Lys-11 is an active-site residue. Residue 95 to 105 participates in ATP binding; sequence PVAAGLGGGSS. The active site involves Asp-137.

It belongs to the GHMP kinase family. IspE subfamily.

The catalysed reaction is 4-CDP-2-C-methyl-D-erythritol + ATP = 4-CDP-2-C-methyl-D-erythritol 2-phosphate + ADP + H(+). The protein operates within isoprenoid biosynthesis; isopentenyl diphosphate biosynthesis via DXP pathway; isopentenyl diphosphate from 1-deoxy-D-xylulose 5-phosphate: step 3/6. In terms of biological role, catalyzes the phosphorylation of the position 2 hydroxy group of 4-diphosphocytidyl-2C-methyl-D-erythritol. The protein is 4-diphosphocytidyl-2-C-methyl-D-erythritol kinase of Pelobacter propionicus (strain DSM 2379 / NBRC 103807 / OttBd1).